We begin with the raw amino-acid sequence, 88 residues long: Putative membrane protein insertion efficiency factor (88 aa).

The interval 68–88 (VPPKKDKNADSEHSCKVHHHH) is disordered. Positions 69 to 82 (PPKKDKNADSEHSC) are enriched in basic and acidic residues.

Belongs to the UPF0161 family.

It is found in the cell membrane. Could be involved in insertion of integral membrane proteins into the membrane. This Listeria monocytogenes serovar 1/2a (strain ATCC BAA-679 / EGD-e) protein is Putative membrane protein insertion efficiency factor.